We begin with the raw amino-acid sequence, 338 residues long: DNA-directed RNA polymerase subunit alpha (338 aa).

Positions 1–234 (MIQKNWQELI…DQLEIFVNFE (234 aa)) are alpha N-terminal domain (alpha-NTD). An alpha C-terminal domain (alpha-CTD) region spans residues 250 to 338 (FSPALLKKVD…ELAKRFEEHY (89 aa)).

The protein belongs to the RNA polymerase alpha chain family. As to quaternary structure, homodimer. The RNAP catalytic core consists of 2 alpha, 1 beta, 1 beta' and 1 omega subunit. When a sigma factor is associated with the core the holoenzyme is formed, which can initiate transcription.

The enzyme catalyses RNA(n) + a ribonucleoside 5'-triphosphate = RNA(n+1) + diphosphate. DNA-dependent RNA polymerase catalyzes the transcription of DNA into RNA using the four ribonucleoside triphosphates as substrates. This Xanthobacter autotrophicus (strain ATCC BAA-1158 / Py2) protein is DNA-directed RNA polymerase subunit alpha.